We begin with the raw amino-acid sequence, 335 residues long: RNA 3'-terminal phosphate cyclase (335 aa).

Residues Gln-101 and 282–285 (HMGD) each bind ATP. His-306 (tele-AMP-histidine intermediate) is an active-site residue.

This sequence belongs to the RNA 3'-terminal cyclase family. Type 1 subfamily.

The protein localises to the cytoplasm. It catalyses the reaction a 3'-end 3'-phospho-ribonucleotide-RNA + ATP = a 3'-end 2',3'-cyclophospho-ribonucleotide-RNA + AMP + diphosphate. Functionally, catalyzes the conversion of 3'-phosphate to a 2',3'-cyclic phosphodiester at the end of RNA. The mechanism of action of the enzyme occurs in 3 steps: (A) adenylation of the enzyme by ATP; (B) transfer of adenylate to an RNA-N3'P to produce RNA-N3'PP5'A; (C) and attack of the adjacent 2'-hydroxyl on the 3'-phosphorus in the diester linkage to produce the cyclic end product. The biological role of this enzyme is unknown but it is likely to function in some aspects of cellular RNA processing. This Sulfolobus acidocaldarius (strain ATCC 33909 / DSM 639 / JCM 8929 / NBRC 15157 / NCIMB 11770) protein is RNA 3'-terminal phosphate cyclase.